We begin with the raw amino-acid sequence, 317 residues long: Transaldolase (317 aa).

The Schiff-base intermediate with substrate role is filled by lysine 126.

It belongs to the transaldolase family. Type 1 subfamily. Homodimer.

The protein resides in the cytoplasm. The enzyme catalyses D-sedoheptulose 7-phosphate + D-glyceraldehyde 3-phosphate = D-erythrose 4-phosphate + beta-D-fructose 6-phosphate. Its pathway is carbohydrate degradation; pentose phosphate pathway; D-glyceraldehyde 3-phosphate and beta-D-fructose 6-phosphate from D-ribose 5-phosphate and D-xylulose 5-phosphate (non-oxidative stage): step 2/3. Transaldolase is important for the balance of metabolites in the pentose-phosphate pathway. This Burkholderia vietnamiensis (strain G4 / LMG 22486) (Burkholderia cepacia (strain R1808)) protein is Transaldolase.